Consider the following 242-residue polypeptide: Segregation and condensation protein A (242 aa).

It belongs to the ScpA family. As to quaternary structure, component of a cohesin-like complex composed of ScpA, ScpB and the Smc homodimer, in which ScpA and ScpB bind to the head domain of Smc. The presence of the three proteins is required for the association of the complex with DNA.

The protein localises to the cytoplasm. Functionally, participates in chromosomal partition during cell division. May act via the formation of a condensin-like complex containing Smc and ScpB that pull DNA away from mid-cell into both cell halves. This is Segregation and condensation protein A from Lactococcus lactis subsp. cremoris (strain SK11).